Here is a 390-residue protein sequence, read N- to C-terminus: Putative MSV199 domain-containing protein 211L (390 aa).

Residues 181–263 (HDRKAQEEKE…FDLSDVRDRL (83 aa)) adopt a coiled-coil conformation.

The sequence is that of Putative MSV199 domain-containing protein 211L from Acheta domesticus (House cricket).